Here is a 621-residue protein sequence, read N- to C-terminus: Glucose 1,6-bisphosphate synthase (621 aa).

Positions 73 and 175 each coordinate alpha-D-glucose 1,6-bisphosphate. Residue serine 175 is the Phosphoserine intermediate of the active site. Serine 175, aspartate 332, aspartate 334, and aspartate 336 together coordinate Mg(2+). A Phosphoserine modification is found at serine 175. Aspartate 336, arginine 337, glutamate 433, serine 435, and lysine 447 together coordinate alpha-D-glucose 1,6-bisphosphate.

Belongs to the phosphohexose mutase family. In terms of tissue distribution, expressed at highest levels in the brain and testis, at intermediate levels in thymus, spleen, lung and skeletal muscle, and at lowest levels in kidney, liver and heart.

The protein localises to the cytoplasm. Its subcellular location is the cytosol. The catalysed reaction is (2R)-3-phospho-glyceroyl phosphate + alpha-D-glucose 1-phosphate = alpha-D-glucose 1,6-bisphosphate + (2R)-3-phosphoglycerate + H(+). The enzyme catalyses alpha-D-glucose 6-phosphate + (2R)-3-phospho-glyceroyl phosphate = alpha-D-glucose 1,6-bisphosphate + (2R)-3-phosphoglycerate + H(+). It catalyses the reaction (2R)-3-phospho-glyceroyl phosphate + alpha-D-ribose 1-phosphate = alpha-D-ribose 1,5-bisphosphate + (2R)-3-phosphoglycerate + H(+). It carries out the reaction 2-deoxy-alpha-D-ribose 1-phosphate + (2R)-3-phospho-glyceroyl phosphate = 2-deoxy-alpha-D-ribose 1,5-bisphosphate + (2R)-3-phosphoglycerate + H(+). The catalysed reaction is (2R)-3-phospho-glyceroyl phosphate + alpha-D-mannose 1-phosphate = alpha-D-mannose 1,6-bisphosphate + (2R)-3-phosphoglycerate + H(+). In terms of biological role, glucose 1,6-bisphosphate synthase using 1,3-bisphosphoglycerate as a phosphate donor and a series of 1-phosphate sugars, including glucose 1-phosphate, mannose 1-phosphate, ribose 1-phosphate and deoxyribose 1-phosphate, as acceptors. In vitro, also exhibits very low phosphopentomutase and phosphoglucomutase activity which are most probably not physiologically relevant. The sequence is that of Glucose 1,6-bisphosphate synthase from Mus musculus (Mouse).